The chain runs to 209 residues: Ribosomal RNA large subunit methyltransferase E (209 aa).

S-adenosyl-L-methionine contacts are provided by Gly63, Trp65, Asp83, Asp99, and Asp124. Lys164 (proton acceptor) is an active-site residue. Residues 191–209 form the TRAM domain; that stretch reads EASRGRSREVYIVATGYKG.

It belongs to the class I-like SAM-binding methyltransferase superfamily. RNA methyltransferase RlmE family.

It localises to the cytoplasm. It carries out the reaction uridine(2552) in 23S rRNA + S-adenosyl-L-methionine = 2'-O-methyluridine(2552) in 23S rRNA + S-adenosyl-L-homocysteine + H(+). Functionally, specifically methylates the uridine in position 2552 of 23S rRNA at the 2'-O position of the ribose in the fully assembled 50S ribosomal subunit. The sequence is that of Ribosomal RNA large subunit methyltransferase E from Haemophilus influenzae (strain 86-028NP).